The chain runs to 343 residues: ABC transporter riboflavin-binding protein RfuA (343 aa).

The first 19 residues, 1 to 19 (MNGAVCVLSALIAVFTCFS), serve as a signal peptide directing secretion. The N-palmitoyl cysteine moiety is linked to residue Cys20. Cys20 carries S-diacylglycerol cysteine lipidation. Riboflavin-binding positions include 43–46 (SPVY), Asp124, Gln140, Tyr176, Trp208, and Asp255.

This sequence belongs to the BMP lipoprotein family. In terms of assembly, monomer in solution. The complex is probably composed of two ATP-binding proteins (RfuB), two transmembrane proteins (RfuC and RfuD) and a solute-binding protein (RfuA).

The protein resides in the cell inner membrane. Its function is as follows. Probably part of the ABC transporter complex RfuABCD involved in riboflavin import. Binds riboflavin. This Treponema pallidum (strain Nichols) protein is ABC transporter riboflavin-binding protein RfuA.